Reading from the N-terminus, the 922-residue chain is Up-regulator of cell proliferation (922 aa).

Positions Met-1 to Glu-20 are disordered. Phosphoserine is present on Ser-3. Residues Arg-680–Arg-920 form the VLIG-type G domain.

This sequence belongs to the TRAFAC class dynamin-like GTPase superfamily. Very large inducible GTPase (VLIG) family.

Its subcellular location is the cytoplasm. It localises to the nucleus. May be involved in cell cycle progression through the regulation of cyclin D1 expression. The polypeptide is Up-regulator of cell proliferation (URGCP) (Bos taurus (Bovine)).